Reading from the N-terminus, the 530-residue chain is Phosphoenolpyruvate carboxykinase (ATP) 2 (530 aa).

The substrate site is built by R54, Y191, and K197. Residues K197, H216, and 232-240 each bind ATP; that span reads GLSGTGKTT. K197 and H216 together coordinate Mn(2+). D253 is a binding site for Mn(2+). ATP contacts are provided by residues E281, R318, 437–438, and T443; that span reads RV. Position 318 (R318) interacts with substrate.

This sequence belongs to the phosphoenolpyruvate carboxykinase (ATP) family. It depends on Mn(2+) as a cofactor.

It is found in the cytoplasm. It catalyses the reaction oxaloacetate + ATP = phosphoenolpyruvate + ADP + CO2. It participates in carbohydrate biosynthesis; gluconeogenesis. Involved in the gluconeogenesis. Catalyzes the conversion of oxaloacetate (OAA) to phosphoenolpyruvate (PEP) through direct phosphoryl transfer between the nucleoside triphosphate and OAA. This chain is Phosphoenolpyruvate carboxykinase (ATP) 2, found in Salinibacter ruber (strain DSM 13855 / M31).